The primary structure comprises 1950 residues: E3 ubiquitin-protein ligase UBR1 (1950 aa).

Residues H118, C123, C136, C139, C148, C151, H157, H160, H161, C175, C177, and C189 each contribute to the Zn(2+) site. The UBR-type zinc finger occupies 121-194; the sequence is RNCGRKFKIG…SPLHCKAEEQ (74 aa). Residues S296 and S300 each carry the phosphoserine modification. The segment at 678–681 is ubiquitin-binding loop; that stretch reads HVLH. A Zn(2+)-binding site is contributed by D952. The interval 1165-1200 is UBC2-binding region (U2BR); that stretch reads KERKRRLAKKHQARLLAKFNNQQTKFMKEHESEFDE. The Zn(2+) site is built by C1220, C1223, C1295, H1297, H1300, C1303, C1320, and C1323. An RING-type; atypical zinc finger spans residues 1220–1324; the sequence is CALCQDSSST…SNAFICPLCQ (105 aa). A cap helical domain (CHD) region spans residues 1333–1665; it reads LCQTSKANTG…YEYCGIIKLI (333 aa). Zn(2+)-binding residues include C1703, C1706, H1722, C1727, H1763, and D1775. 2 disordered regions span residues 1826-1846 and 1893-1950; these read RPRRIPPTDEDDEDMEEGEDG and TLQP…REIW. Acidic residues-rich tracts occupy residues 1833 to 1846 and 1934 to 1950; these read TDEDDEDMEEGEDG and DEDDSDDNDDSDEREIW. A Phosphoserine modification is found at S1938.

It belongs to the E3 ubiquitin-protein ligase UBR1-like family. As to quaternary structure, interacts with UBC2. Interacts with RPN2, RPT1 and RPT6 from the 26S proteasome.

It catalyses the reaction S-ubiquitinyl-[E2 ubiquitin-conjugating enzyme]-L-cysteine + [acceptor protein]-L-lysine = [E2 ubiquitin-conjugating enzyme]-L-cysteine + N(6)-ubiquitinyl-[acceptor protein]-L-lysine.. It participates in protein modification; protein ubiquitination. Functionally, ubiquitin ligase protein which is a component of the N-end rule pathway. Recognizes and binds to proteins bearing specific N-terminal residues that are destabilizing according to the N-end rule, leading to their ubiquitination and subsequent degradation. Recognizes both type-1 and type-2 N-degrons, containing positively charged amino acids (Arg, Lys and His) and bulky and hydrophobic amino acids, respectively. The chain is E3 ubiquitin-protein ligase UBR1 from Saccharomyces cerevisiae (strain ATCC 204508 / S288c) (Baker's yeast).